The following is a 225-amino-acid chain: Isoprenyl transferase 1 (225 aa).

Asp3 is an active-site residue. Asp3 is a Mg(2+) binding site. Residues 4-7 (GNRR), Trp8, His21, and 49-51 (SME) each bind substrate. Asn52 functions as the Proton acceptor in the catalytic mechanism. Residues Arg55, Arg174, and 180 to 182 (RLS) each bind substrate. Glu193 is a binding site for Mg(2+).

The protein belongs to the UPP synthase family. As to quaternary structure, homodimer. The cofactor is Mg(2+).

Functionally, catalyzes the condensation of isopentenyl diphosphate (IPP) with allylic pyrophosphates generating different type of terpenoids. This is Isoprenyl transferase 1 from Corynebacterium glutamicum (strain ATCC 13032 / DSM 20300 / JCM 1318 / BCRC 11384 / CCUG 27702 / LMG 3730 / NBRC 12168 / NCIMB 10025 / NRRL B-2784 / 534).